Consider the following 785-residue polypeptide: Pre-tRNA-processing protein PTA1 (785 aa).

Positions 487 to 544 are disordered; sequence INSVPSSSSSKRKSDDDDDGNDNEEVGNDGPTANSKKIKMETEPLAEEPEEPEDDDRM. S500 bears the Phosphoserine mark. 2 stretches are compositionally biased toward acidic residues: residues 502–513 and 530–542; these read DDDDGNDNEEVG and PLAE…EDDD.

In terms of assembly, component of the cleavage and polyadenylation factor (CPF) complex, which is composed of PTI1, SYC1, SSU72, GLC7, MPE1, REF2, PFS2, PTA1, YSH1/BRR5, SWD2, CFT2/YDH1, YTH1, CFT1/YHH1, FIP1 and PAP1. Component of the APT complex, which is a subcomplex of CPF, and is composed of PTI1, SYC1, SSU72, GLC7, REF2, PTA1 and SWD2.

It is found in the nucleus. Its function is as follows. Essential in pre-tRNA processing. Component of the cleavage and polyadenylation factor (CPF) complex, which plays a key role in polyadenylation-dependent pre-mRNA 3'-end formation and cooperates with cleavage factors including the CFIA complex and NAB4/CFIB. Component of the APT complex, which may be involved in polyadenylation-independent transcript 3'-end formation. The chain is Pre-tRNA-processing protein PTA1 (PTA1) from Saccharomyces cerevisiae (strain ATCC 204508 / S288c) (Baker's yeast).